A 338-amino-acid polypeptide reads, in one-letter code: Glycerol-3-phosphate dehydrogenase [NAD(P)+] 1 (338 aa).

NADPH is bound by residues S11, W12, H32, R33, and K109. Residues K109, G140, and S142 each contribute to the sn-glycerol 3-phosphate site. A144 contributes to the NADPH binding site. Residues K195, D248, S258, R259, and N260 each contribute to the sn-glycerol 3-phosphate site. K195 acts as the Proton acceptor in catalysis. R259 contributes to the NADPH binding site. Positions 283 and 285 each coordinate NADPH.

It belongs to the NAD-dependent glycerol-3-phosphate dehydrogenase family.

Its subcellular location is the cytoplasm. The catalysed reaction is sn-glycerol 3-phosphate + NAD(+) = dihydroxyacetone phosphate + NADH + H(+). The enzyme catalyses sn-glycerol 3-phosphate + NADP(+) = dihydroxyacetone phosphate + NADPH + H(+). It functions in the pathway membrane lipid metabolism; glycerophospholipid metabolism. Catalyzes the reduction of the glycolytic intermediate dihydroxyacetone phosphate (DHAP) to sn-glycerol 3-phosphate (G3P), the key precursor for phospholipid synthesis. This Lactobacillus delbrueckii subsp. bulgaricus (strain ATCC 11842 / DSM 20081 / BCRC 10696 / JCM 1002 / NBRC 13953 / NCIMB 11778 / NCTC 12712 / WDCM 00102 / Lb 14) protein is Glycerol-3-phosphate dehydrogenase [NAD(P)+] 1.